Here is a 122-residue protein sequence, read N- to C-terminus: Large ribosomal subunit protein uL14 (122 aa).

Belongs to the universal ribosomal protein uL14 family. As to quaternary structure, part of the 50S ribosomal subunit. Forms a cluster with proteins L3 and L19. In the 70S ribosome, L14 and L19 interact and together make contacts with the 16S rRNA in bridges B5 and B8.

Binds to 23S rRNA. Forms part of two intersubunit bridges in the 70S ribosome. The protein is Large ribosomal subunit protein uL14 of Rhodospirillum centenum (strain ATCC 51521 / SW).